Consider the following 393-residue polypeptide: Chalcone synthase 2 (393 aa).

The active site involves cysteine 166.

It belongs to the thiolase-like superfamily. Chalcone/stilbene synthases family.

The enzyme catalyses (E)-4-coumaroyl-CoA + 3 malonyl-CoA + 3 H(+) = 2',4,4',6'-tetrahydroxychalcone + 3 CO2 + 4 CoA. The protein operates within secondary metabolite biosynthesis; flavonoid biosynthesis. Its function is as follows. The primary product of this enzyme is 4,2',4',6'-tetrahydroxychalcone (also termed naringenin-chalcone or chalcone) which can under specific conditions spontaneously isomerize into naringenin. This chain is Chalcone synthase 2 (CHS2), found in Ruta graveolens (Common rue).